Consider the following 329-residue polypeptide: Beta-ketoacyl-[acyl-carrier-protein] synthase III (329 aa).

Catalysis depends on residues C114 and H255. The interval 256-260 (QANQR) is ACP-binding. The active site involves N285.

This sequence belongs to the thiolase-like superfamily. FabH family. In terms of assembly, homodimer.

The protein localises to the cytoplasm. The enzyme catalyses malonyl-[ACP] + acetyl-CoA + H(+) = 3-oxobutanoyl-[ACP] + CO2 + CoA. The protein operates within lipid metabolism; fatty acid biosynthesis. Its function is as follows. Catalyzes the condensation reaction of fatty acid synthesis by the addition to an acyl acceptor of two carbons from malonyl-ACP. Catalyzes the first condensation reaction which initiates fatty acid synthesis and may therefore play a role in governing the total rate of fatty acid production. Possesses both acetoacetyl-ACP synthase and acetyl transacylase activities. Its substrate specificity determines the biosynthesis of branched-chain and/or straight-chain of fatty acids. The protein is Beta-ketoacyl-[acyl-carrier-protein] synthase III of Thermosynechococcus vestitus (strain NIES-2133 / IAM M-273 / BP-1).